The following is a 108-amino-acid chain: Putative pterin-4-alpha-carbinolamine dehydratase (108 aa).

The protein belongs to the pterin-4-alpha-carbinolamine dehydratase family.

It carries out the reaction (4aS,6R)-4a-hydroxy-L-erythro-5,6,7,8-tetrahydrobiopterin = (6R)-L-erythro-6,7-dihydrobiopterin + H2O. The protein is Putative pterin-4-alpha-carbinolamine dehydratase of Chromobacterium violaceum (strain ATCC 12472 / DSM 30191 / JCM 1249 / CCUG 213 / NBRC 12614 / NCIMB 9131 / NCTC 9757 / MK).